Reading from the N-terminus, the 628-residue chain is Protein ETHYLENE INSENSITIVE 3 (628 aa).

Residues 38–68 (EDDYTDDEIDVDELERRMWRDKMRLKRLKEQ) are a coiled coil. Positions 66 to 79 (KEQDKGKEGVDAAK) are enriched in basic and acidic residues. A disordered region spans residues 66–92 (KEQDKGKEGVDAAKQRQSQEQARRKKM). A DNA-binding domain region spans residues 174 to 306 (TPHTLQELQD…SLARELYPES (133 aa)).

Belongs to the EIN3 family. Acts as a homodimer to bind the primary ethylene response element. Interacts with TAF12B. Interacts with KIN10. Binds to ENAP1 in the presence of ethylene; this reaction facilitates its association with histone. In terms of processing, phosphorylated by KIN10.

The protein localises to the nucleus. With respect to regulation, activated by phosphorylation by MPK3 and MPK6. Down-regulated by KIN10 that controls its protein stability under a phosphorylation-dependent manner. Satnilitzed during hypoxia (e.g. submergences) via a ceramides-triggered and CTR1-dependent manner. Transcription factor acting as a positive regulator in the ethylene response pathway, by promoting histone acetylation in an ENAP1-dependent manner, thus accelerating the expression of ethylene-responsive genes. Binds DNA. Is required for ethylene responsiveness in adult plant tissues. Binds a primary ethylene response element present in the ETHYLENE-RESPONSE-FACTOR1 promoter with consequence to activate the transcription of this gene. This Arabidopsis thaliana (Mouse-ear cress) protein is Protein ETHYLENE INSENSITIVE 3.